A 78-amino-acid chain; its full sequence is MEFREQVLDLLTEVAENNVIKENPDVELFEEGIFDSFQTVGLLLEIQNKLDIEVSIMDFDRDEWATPNKIVEVLEELR.

The region spanning 1-78 (MEFREQVLDL…KIVEVLEELR (78 aa)) is the Carrier domain. S36 carries the post-translational modification O-(pantetheine 4'-phosphoryl)serine.

The protein belongs to the DltC family. In terms of processing, 4'-phosphopantetheine is transferred from CoA to a specific serine of apo-DCP.

Its subcellular location is the cytoplasm. Its pathway is cell wall biogenesis; lipoteichoic acid biosynthesis. Functionally, carrier protein involved in the D-alanylation of lipoteichoic acid (LTA). The loading of thioester-linked D-alanine onto DltC is catalyzed by D-alanine--D-alanyl carrier protein ligase DltA. The DltC-carried D-alanyl group is further transferred to cell membrane phosphatidylglycerol (PG) by forming an ester bond, probably catalyzed by DltD. D-alanylation of LTA plays an important role in modulating the properties of the cell wall in Gram-positive bacteria, influencing the net charge of the cell wall. The sequence is that of D-alanyl carrier protein from Staphylococcus xylosus.